A 706-amino-acid chain; its full sequence is Protein-glutamine gamma-glutamyltransferase 6 (706 aa).

3 residues coordinate Ca(2+): Ala-223, Asn-226, and Asn-228. Cys-274 is an active-site residue. Asp-303, Asp-305, Asn-307, Ser-309, and Asp-327 together coordinate Ca(2+). Catalysis depends on residues His-333 and Asp-356. Residues Asn-396, Thr-417, Glu-445, and Glu-450 each contribute to the Ca(2+) site.

It belongs to the transglutaminase superfamily. Transglutaminase family. Ca(2+) serves as cofactor.

It localises to the cytoplasm. The catalysed reaction is L-glutaminyl-[protein] + L-lysyl-[protein] = [protein]-L-lysyl-N(6)-5-L-glutamyl-[protein] + NH4(+). Its function is as follows. Catalyzes the cross-linking of proteins and the conjugation of polyamines to proteins. This Homo sapiens (Human) protein is Protein-glutamine gamma-glutamyltransferase 6 (TGM6).